The primary structure comprises 945 residues: Valine--tRNA ligase (945 aa).

The 'HIGH' region signature appears at 42–52; it reads PNVTGTLHMGH. A 'KMSKS' region motif is present at residues 552 to 556; sequence KMSKS. Lysine 555 serves as a coordination point for ATP. A coiled-coil region spans residues 879–945; it reads DKAAETARLS…VQNQLAKLKD (67 aa).

The protein belongs to the class-I aminoacyl-tRNA synthetase family. ValS type 1 subfamily. Monomer.

Its subcellular location is the cytoplasm. It carries out the reaction tRNA(Val) + L-valine + ATP = L-valyl-tRNA(Val) + AMP + diphosphate. Catalyzes the attachment of valine to tRNA(Val). As ValRS can inadvertently accommodate and process structurally similar amino acids such as threonine, to avoid such errors, it has a 'posttransfer' editing activity that hydrolyzes mischarged Thr-tRNA(Val) in a tRNA-dependent manner. This is Valine--tRNA ligase from Neisseria meningitidis serogroup B (strain ATCC BAA-335 / MC58).